A 141-amino-acid chain; its full sequence is Large ribosomal subunit protein uL11 (141 aa).

Belongs to the universal ribosomal protein uL11 family. In terms of assembly, part of the ribosomal stalk of the 50S ribosomal subunit. Interacts with L10 and the large rRNA to form the base of the stalk. L10 forms an elongated spine to which L12 dimers bind in a sequential fashion forming a multimeric L10(L12)X complex. Post-translationally, one or more lysine residues are methylated.

Its function is as follows. Forms part of the ribosomal stalk which helps the ribosome interact with GTP-bound translation factors. This chain is Large ribosomal subunit protein uL11, found in Chlamydia caviae (strain ATCC VR-813 / DSM 19441 / 03DC25 / GPIC) (Chlamydophila caviae).